Reading from the N-terminus, the 572-residue chain is Urease subunit alpha (572 aa).

The Urease domain maps to 130–572 (GGVDTHIHFI…LPMAQRYFLF (443 aa)). Residues His-135, His-137, and Lys-218 each coordinate Ni(2+). Residue Lys-218 is modified to N6-carboxylysine. His-220 is a substrate binding site. The Ni(2+) site is built by His-247 and His-273. His-321 functions as the Proton donor in the catalytic mechanism. Residue Asp-361 participates in Ni(2+) binding.

This sequence belongs to the metallo-dependent hydrolases superfamily. Urease alpha subunit family. As to quaternary structure, heterotrimer of UreA (gamma), UreB (beta) and UreC (alpha) subunits. Three heterotrimers associate to form the active enzyme. The cofactor is Ni cation. Carboxylation allows a single lysine to coordinate two nickel ions.

The protein localises to the cytoplasm. It carries out the reaction urea + 2 H2O + H(+) = hydrogencarbonate + 2 NH4(+). It functions in the pathway nitrogen metabolism; urea degradation; CO(2) and NH(3) from urea (urease route): step 1/1. The polypeptide is Urease subunit alpha (Ralstonia nicotianae (strain ATCC BAA-1114 / GMI1000) (Ralstonia solanacearum)).